A 310-amino-acid chain; its full sequence is p-hydroxybenzoic acid efflux pump subunit AaeA (310 aa).

The helical transmembrane segment at 12 to 32 (AITVALVILAFIAISRAWVFY) threads the bilayer.

The protein belongs to the membrane fusion protein (MFP) (TC 8.A.1) family.

The protein localises to the cell inner membrane. In terms of biological role, forms an efflux pump with AaeB. This is p-hydroxybenzoic acid efflux pump subunit AaeA from Enterobacter sp. (strain 638).